Here is a 235-residue protein sequence, read N- to C-terminus: Uridylate kinase (235 aa).

9-12 (KLSG) is a binding site for ATP. Residue glycine 51 coordinates UMP. ATP-binding residues include glycine 52 and arginine 56. UMP contacts are provided by residues aspartate 71 and 132–139 (TGNPYFTT). ATP contacts are provided by threonine 159, tyrosine 165, and aspartate 168.

This sequence belongs to the UMP kinase family. In terms of assembly, homohexamer.

It localises to the cytoplasm. The enzyme catalyses UMP + ATP = UDP + ADP. It participates in pyrimidine metabolism; CTP biosynthesis via de novo pathway; UDP from UMP (UMPK route): step 1/1. Inhibited by UTP. In terms of biological role, catalyzes the reversible phosphorylation of UMP to UDP. This is Uridylate kinase from Cytophaga hutchinsonii (strain ATCC 33406 / DSM 1761 / CIP 103989 / NBRC 15051 / NCIMB 9469 / D465).